A 289-amino-acid polypeptide reads, in one-letter code: Phospholipase C (289 aa).

The first 25 residues, 1 to 25, serve as a signal peptide directing secretion; it reads MKFKKVVLGMCLIASVLVFPVTIKA. A propeptide spanning residues 26 to 51 is cleaved from the precursor; sequence NACCDEYLQTPAAPHDIDSKLPHKLS. Zn(2+)-binding residues include Trp52, His65, Asp106, His120, His169, Asp173, His179, His193, and Glu197. The Zn-dependent PLC domain occupies 52–289; the sequence is WSADNPTNTD…LEFWSKKTNE (238 aa).

It belongs to the bacterial zinc-metallophospholipase C family. Forms monomers, dimers and higher order oligomers, but only the monomer is enzymatically active. Zn(2+) is required as a cofactor.

The protein localises to the secreted. It carries out the reaction a 1,2-diacyl-sn-glycero-3-phosphocholine + H2O = phosphocholine + a 1,2-diacyl-sn-glycerol + H(+). The enzyme catalyses 1,2-dihexadecanoyl-sn-glycero-3-phosphocholine + H2O = 1,2-dihexadecanoyl-sn-glycerol + phosphocholine + H(+). It catalyses the reaction 1-hexadecanoyl-2-(9Z-octadecenoyl)-sn-glycero-3-phosphocholine + H2O = 1-hexadecanoyl-2-(9Z-octadecenoyl)-sn-glycerol + phosphocholine + H(+). The catalysed reaction is 1,2-di-(9Z-octadecenoyl)-sn-glycero-3-phosphocholine + H2O = 1,2-di-(9Z-octadecenoyl)-sn-glycerol + phosphocholine + H(+). It carries out the reaction a 1,2-diacyl-sn-glycero-3-phosphoethanolamine + H2O = phosphoethanolamine + a 1,2-diacyl-sn-glycerol + H(+). The enzyme catalyses 1,2-di-(9Z-octadecenoyl)-sn-glycero-3-phosphoethanolamine + H2O = phosphoethanolamine + 1,2-di-(9Z-octadecenoyl)-sn-glycerol + H(+). It catalyses the reaction 1,2-dihexadecanoyl-sn-glycero-3-phosphoethanolamine + H2O = 1,2-dihexadecanoyl-sn-glycerol + phosphoethanolamine + H(+). The catalysed reaction is a 1,2-diacyl-sn-glycero-3-phospho-L-serine + H2O = O-phospho-L-serine + a 1,2-diacyl-sn-glycerol + H(+). It carries out the reaction a 1,2-diacyl-sn-glycero-3-phosphoglycerol + H2O = glycerol 1-phosphate + a 1,2-diacyl-sn-glycerol + H(+). The enzyme catalyses a 1,2-diacyl-sn-glycero-3-phospho-(1D-myo-inositol) + H2O = 1D-myo-inositol 1-phosphate + a 1,2-diacyl-sn-glycerol + H(+). It catalyses the reaction a sphingomyelin + H2O = phosphocholine + an N-acylsphing-4-enine + H(+). The catalysed reaction is a 1-O-(1Z-alkenyl)-2-acyl-sn-glycero-3-phosphoethanolamine + H2O = a 1-O-(1Z-alkenyl)-2-acyl-sn-glycerol + phosphoethanolamine + H(+). Enzymatic activity of LmPC-PLC can be specifically inhibited by its propeptide added in trans. The tendency of the enzyme to oligomerize, which appears to largely attenuate the enzymatic activity, may be one of the mechanisms regulating phospholipase activity in the host cell during the different steps of the infection cycle of L.monocytogenes. Enzyme activity is inhibited by EDTA and o-phenanthroline in vitro. Its function is as follows. Major virulence factor whose phospholipase activity facilitates pore formation by the pore-forming toxin listeriolysin O (LLO), leading to vacuolar membrane disruption and vacuolar escape of L.monocytogenes, which enables the bacterium to spread in the host. Acts as a phospholipase C exhibiting broad substrate specificity, with the highest activities towards diacylglycerophospholipids with phosphocholine, phosphoserine, and phosphoethanolamine head groups, but less towards phosphoglycerol or phosphoinositol head groups. Is also able to hydrolyze sphingomyelin and plasmenylethanolamine. The sequence is that of Phospholipase C from Listeria monocytogenes serovar 1/2a (strain ATCC BAA-679 / EGD-e).